The sequence spans 148 residues: Large ribosomal subunit protein bL9 (148 aa).

It belongs to the bacterial ribosomal protein bL9 family.

Binds to the 23S rRNA. The polypeptide is Large ribosomal subunit protein bL9 (Salinispora tropica (strain ATCC BAA-916 / DSM 44818 / JCM 13857 / NBRC 105044 / CNB-440)).